Here is a 243-residue protein sequence, read N- to C-terminus: Fibroblast growth factor 12 (243 aa).

2 disordered regions span residues 1–39 (MAAA…DGRS) and 216–243 (IGEK…QDST). A Bipartite nuclear localization signal motif is present at residues 11–38 (RQKRQARESNSDRVSASKRRSSPSKDGR).

It belongs to the heparin-binding growth factors family. In terms of assembly, interacts with the C-terminal region of SCN9A. As to expression, brain, eye and testis; highly expressed in embryonic retina, olfactory epithelium, olfactory bulb, and in a segmental pattern of the body wall; in adult olfactory bulb, less in cerebellum, deep cerebellar nuclei, cortex and multiple midbrain structures.

The protein resides in the nucleus. Involved in nervous system development and function. Involved in the positive regulation of voltage-gated sodium channel activity. Promotes neuronal excitability by elevating the voltage dependence of neuronal sodium channel SCN8A fast inactivation. This chain is Fibroblast growth factor 12 (FGF12), found in Homo sapiens (Human).